The chain runs to 506 residues: Bifunctional purine biosynthesis protein PurH (506 aa).

In terms of domain architecture, MGS-like spans 1–142 (MRAIISVYRK…KNFFRVVILV (142 aa)).

This sequence belongs to the PurH family.

It catalyses the reaction (6R)-10-formyltetrahydrofolate + 5-amino-1-(5-phospho-beta-D-ribosyl)imidazole-4-carboxamide = 5-formamido-1-(5-phospho-D-ribosyl)imidazole-4-carboxamide + (6S)-5,6,7,8-tetrahydrofolate. It carries out the reaction IMP + H2O = 5-formamido-1-(5-phospho-D-ribosyl)imidazole-4-carboxamide. The protein operates within purine metabolism; IMP biosynthesis via de novo pathway; 5-formamido-1-(5-phospho-D-ribosyl)imidazole-4-carboxamide from 5-amino-1-(5-phospho-D-ribosyl)imidazole-4-carboxamide (10-formyl THF route): step 1/1. Its pathway is purine metabolism; IMP biosynthesis via de novo pathway; IMP from 5-formamido-1-(5-phospho-D-ribosyl)imidazole-4-carboxamide: step 1/1. This chain is Bifunctional purine biosynthesis protein PurH, found in Aquifex aeolicus (strain VF5).